Here is a 66-residue protein sequence, read N- to C-terminus: U1-theraphotoxin-Cg1a 1 (66 aa).

The signal sequence occupies residues 1–21 (MKTSALFVIFGLVLLFCNSFA). Positions 22–29 (AELKTTGR) are excised as a propeptide. 3 disulfide bridges follow: cysteine 31-cysteine 46, cysteine 38-cysteine 51, and cysteine 45-cysteine 58. Residue proline 63 is modified to Proline amide.

Belongs to the neurotoxin 10 (Hwtx-1) family. 46 (Jztx-7/10/12) subfamily. In terms of tissue distribution, expressed by the venom gland.

It is found in the secreted. Its function is as follows. Probable ion channel inhibitor. The protein is U1-theraphotoxin-Cg1a 1 of Chilobrachys guangxiensis (Chinese earth tiger tarantula).